The primary structure comprises 73 residues: uncharacterized protein (73 aa).

A coiled-coil region spans residues 20 to 49 (NATYNKNLELEKRLAKIRNEIPNKSKLIAT).

This is an uncharacterized protein from Acheta domesticus (House cricket).